Consider the following 96-residue polypeptide: Large ribosomal subunit protein uL4 (96 aa).

The interval 77–96 (RAPNKKVKRRELKKNPLKNL) is disordered. Basic residues predominate over residues 79 to 96 (PNKKVKRRELKKNPLKNL).

This sequence belongs to the universal ribosomal protein uL4 family. As to quaternary structure, component of the large ribosomal subunit.

The protein resides in the cytoplasm. Functionally, component of the large ribosomal subunit. The ribosome is a large ribonucleoprotein complex responsible for the synthesis of proteins in the cell. The chain is Large ribosomal subunit protein uL4 (rpl4) from Xenopus tropicalis (Western clawed frog).